Here is a 246-residue protein sequence, read N- to C-terminus: 14-3-3 protein beta/alpha (246 aa).

M1 is subject to N-acetylmethionine. T2 is modified (N-acetylthreonine; in 14-3-3 protein beta/alpha, N-terminally processed). Residue T2 is modified to Phosphothreonine. Position 5 is an N6-acetyllysine (K5). At K51 the chain carries N6-acetyllysine; alternate. A Glycyl lysine isopeptide (Lys-Gly) (interchain with G-Cter in SUMO2); alternate cross-link involves residue K51. Position 60 is a phosphoserine (S60). Position 70 is an N6-acetyllysine (K70). Residues Y84 and Y106 each carry the 3'-nitrotyrosine modification. An N6-acetyllysine modification is found at K117. Residues S186 and S232 each carry the phosphoserine modification.

The protein belongs to the 14-3-3 family. In terms of assembly, homodimer. Interacts with SAMSN1 and PRKCE. Interacts with AKAP13. Interacts with SSH1 and TORC2/CRTC2. Interacts with ABL1; the interaction results in cytoplasmic location of ABL1 and inhibition of cABL-mediated apoptosis. Interacts with ROR2 (dimer); the interaction results in phosphorylation of YWHAB on tyrosine residues. Interacts with GAB2. Interacts with YAP1 (phosphorylated form). Interacts with the phosphorylated (by AKT1) form of SRPK2. Interacts with PKA-phosphorylated AANAT. Interacts with MYO1C. Interacts with SIRT2. Interacts with the 'Thr-369' phosphorylated form of DAPK2. Interacts with PI4KB, TBC1D22A and TBC1D22B. Interacts with the 'Ser-1134' and 'Ser-1161' phosphorylated form of SOS1. Interacts (via phosphorylated form) with YWHAB; this interaction occurs in a protein kinase AKT1-dependent manner. Interacts with SLITRK1. Interacts with SYNPO2 (phosphorylated form); YWHAB competes with ACTN2 for interaction with SYNPO2. Interacts with RIPOR2 (via phosphorylated form); this interaction occurs in a chemokine-dependent manner and does not compete for binding of RIPOR2 with RHOA nor blocks inhibition of RIPOR2-mediated RHOA activity. Interacts with MARK2 and MARK3. Interacts with TESK1; the interaction is dependent on the phosphorylation of TESK1 'Ser-439' and inhibits TESK1 kinase activity. Interacts with MEFV. Interacts with HDAC4. Interacts with ADAM22 (via C-terminus). In terms of processing, the alpha, brain-specific form differs from the beta form in being phosphorylated. Phosphorylated on Ser-60 by protein kinase C delta type catalytic subunit in a sphingosine-dependent fashion.

It localises to the cytoplasm. It is found in the melanosome. Functionally, adapter protein implicated in the regulation of a large spectrum of both general and specialized signaling pathways. Binds to a large number of partners, usually by recognition of a phosphoserine or phosphothreonine motif. Binding generally results in the modulation of the activity of the binding partner. Negative regulator of osteogenesis. Blocks the nuclear translocation of the phosphorylated form (by AKT1) of SRPK2 and antagonizes its stimulatory effect on cyclin D1 expression resulting in blockage of neuronal apoptosis elicited by SRPK2. Negative regulator of signaling cascades that mediate activation of MAP kinases via AKAP13. This is 14-3-3 protein beta/alpha (YWHAB) from Bos taurus (Bovine).